A 360-amino-acid chain; its full sequence is Aminomethyltransferase (360 aa).

The protein belongs to the GcvT family. In terms of assembly, the glycine cleavage system is composed of four proteins: P, T, L and H.

The catalysed reaction is N(6)-[(R)-S(8)-aminomethyldihydrolipoyl]-L-lysyl-[protein] + (6S)-5,6,7,8-tetrahydrofolate = N(6)-[(R)-dihydrolipoyl]-L-lysyl-[protein] + (6R)-5,10-methylene-5,6,7,8-tetrahydrofolate + NH4(+). Functionally, the glycine cleavage system catalyzes the degradation of glycine. The protein is Aminomethyltransferase of Bdellovibrio bacteriovorus (strain ATCC 15356 / DSM 50701 / NCIMB 9529 / HD100).